Consider the following 457-residue polypeptide: Argininosuccinate lyase (457 aa).

The protein belongs to the lyase 1 family. Argininosuccinate lyase subfamily.

The protein resides in the cytoplasm. It carries out the reaction 2-(N(omega)-L-arginino)succinate = fumarate + L-arginine. Its pathway is amino-acid biosynthesis; L-arginine biosynthesis; L-arginine from L-ornithine and carbamoyl phosphate: step 3/3. This chain is Argininosuccinate lyase, found in Haemophilus influenzae (strain PittEE).